Consider the following 354-residue polypeptide: Putative ankyrin repeat protein L284 (354 aa).

3 ANK repeats span residues 201 to 230 (ILDD…LSND), 253 to 284 (SRYP…NPIV), and 286 to 314 (LHKA…DIDI).

The sequence is that of Putative ankyrin repeat protein L284 from Acanthamoeba polyphaga (Amoeba).